A 618-amino-acid polypeptide reads, in one-letter code: Dihydroxy-acid dehydratase (618 aa).

Mg(2+) is bound at residue D81. Residue C122 participates in [2Fe-2S] cluster binding. D123 and K124 together coordinate Mg(2+). The residue at position 124 (K124) is an N6-carboxylysine. C195 contacts [2Fe-2S] cluster. Residue E491 coordinates Mg(2+). S517 acts as the Proton acceptor in catalysis.

Belongs to the IlvD/Edd family. As to quaternary structure, homodimer. [2Fe-2S] cluster serves as cofactor. Mg(2+) is required as a cofactor.

The enzyme catalyses (2R)-2,3-dihydroxy-3-methylbutanoate = 3-methyl-2-oxobutanoate + H2O. The catalysed reaction is (2R,3R)-2,3-dihydroxy-3-methylpentanoate = (S)-3-methyl-2-oxopentanoate + H2O. Its pathway is amino-acid biosynthesis; L-isoleucine biosynthesis; L-isoleucine from 2-oxobutanoate: step 3/4. It functions in the pathway amino-acid biosynthesis; L-valine biosynthesis; L-valine from pyruvate: step 3/4. Functionally, functions in the biosynthesis of branched-chain amino acids. Catalyzes the dehydration of (2R,3R)-2,3-dihydroxy-3-methylpentanoate (2,3-dihydroxy-3-methylvalerate) into 2-oxo-3-methylpentanoate (2-oxo-3-methylvalerate) and of (2R)-2,3-dihydroxy-3-methylbutanoate (2,3-dihydroxyisovalerate) into 2-oxo-3-methylbutanoate (2-oxoisovalerate), the penultimate precursor to L-isoleucine and L-valine, respectively. The sequence is that of Dihydroxy-acid dehydratase from Dechloromonas aromatica (strain RCB).